The following is a 1114-amino-acid chain: Mediator of RNA polymerase II transcription subunit 14 (1114 aa).

Disordered regions lie at residues 1–27 (MPGV…QDGL), 40–79 (ANAQ…GPPE), and 120–141 (HGIH…SPGN). Residues 126–140 (TAPTTGKSPGNQSPG) show a composition bias toward polar residues.

It belongs to the Mediator complex subunit 14 family. As to quaternary structure, component of the Mediator complex.

Its subcellular location is the nucleus. In terms of biological role, component of the Mediator complex, a coactivator involved in the regulated transcription of nearly all RNA polymerase II-dependent genes. Mediator functions as a bridge to convey information from gene-specific regulatory proteins to the basal RNA polymerase II transcription machinery. Mediator is recruited to promoters by direct interactions with regulatory proteins and serves as a scaffold for the assembly of a functional preinitiation complex with RNA polymerase II and the general transcription factors. This chain is Mediator of RNA polymerase II transcription subunit 14 (rgr1), found in Aspergillus niger (strain ATCC MYA-4892 / CBS 513.88 / FGSC A1513).